Here is a 181-residue protein sequence, read N- to C-terminus: Peptidyl-tRNA hydrolase (181 aa).

Tyr-14 provides a ligand contact to tRNA. His-19 acts as the Proton acceptor in catalysis. TRNA contacts are provided by Tyr-62, Asn-64, and Asn-108.

It belongs to the PTH family. Monomer.

The protein resides in the cytoplasm. It catalyses the reaction an N-acyl-L-alpha-aminoacyl-tRNA + H2O = an N-acyl-L-amino acid + a tRNA + H(+). Functionally, hydrolyzes ribosome-free peptidyl-tRNAs (with 1 or more amino acids incorporated), which drop off the ribosome during protein synthesis, or as a result of ribosome stalling. In terms of biological role, catalyzes the release of premature peptidyl moieties from peptidyl-tRNA molecules trapped in stalled 50S ribosomal subunits, and thus maintains levels of free tRNAs and 50S ribosomes. The polypeptide is Peptidyl-tRNA hydrolase (Campylobacter jejuni subsp. jejuni serotype O:2 (strain ATCC 700819 / NCTC 11168)).